The chain runs to 24 residues: GFKQFVHSMGKFGKAFVGEIINPK.

As to expression, expressed by the skin glands.

The protein resides in the secreted. Functionally, has antibacterial activity. This is Xenoposin-precursor fragment B1 from Xenopus borealis (Kenyan clawed frog).